The following is a 456-amino-acid chain: Probable flavin-containing monoamine oxidase A (456 aa).

An S-8alpha-FAD cysteine modification is found at Cys394.

Belongs to the flavin monoamine oxidase family. The cofactor is FAD.

It catalyses the reaction a secondary aliphatic amine + O2 + H2O = a primary amine + an aldehyde + H2O2. The sequence is that of Probable flavin-containing monoamine oxidase A (maoA) from Dictyostelium discoideum (Social amoeba).